Consider the following 181-residue polypeptide: MKTLILFSTRDGQTREIASYLASELKELGIQADVANVHRIEEPQWENYDRVVIGASIRYGHYHSAFQEFVKKHATRLNSMPSAFYSVNLVARKPEKRTPQTNSYARKFLMNSQWRPDRCAVIAGALRYPRYRWYDRFMIKLIMKMSGGETDTRKEVVYTDWEQVANFAREIAHLTDKPTLK.

A Flavodoxin-like domain is found at 3-172; the sequence is TLILFSTRDG…QVANFAREIA (170 aa). FMN contacts are provided by residues 9 to 13 and 84 to 152; these read TRDGQ and FYSV…ETDT.

It belongs to the HemG family. The cofactor is FMN.

Its subcellular location is the cell inner membrane. It carries out the reaction protoporphyrinogen IX + 3 a menaquinone = protoporphyrin IX + 3 a menaquinol. The catalysed reaction is protoporphyrinogen IX + 3 a ubiquinone = protoporphyrin IX + 3 a ubiquinol. The enzyme catalyses protoporphyrinogen IX + 3 a quinone = protoporphyrin IX + 3 a quinol. The protein operates within porphyrin-containing compound metabolism; protoporphyrin-IX biosynthesis; protoporphyrin-IX from protoporphyrinogen-IX: step 1/1. Its function is as follows. Catalyzes the 6-electron oxidation of protoporphyrinogen IX to form protoporphyrin IX; under anaerobic conditions uses menaquinone as an electron acceptor, under aerobic condition uses ubiquinone as an electron acceptor. This is Protoporphyrinogen IX dehydrogenase [quinone] from Escherichia coli O157:H7.